The primary structure comprises 459 residues: Cysteine--tRNA ligase (459 aa).

Zn(2+) is bound at residue C28. Positions 30-40 (MTVYDFCHLGH) match the 'HIGH' region motif. Zn(2+) is bound by residues C209, H234, and E238. The short motif at 266 to 270 (KMAKS) is the 'KMSKS' region element. K269 is an ATP binding site. Residues 440–459 (QARGIELEDTPEGTKWRRTR) form a disordered region.

The protein belongs to the class-I aminoacyl-tRNA synthetase family. Monomer. Zn(2+) is required as a cofactor.

The protein resides in the cytoplasm. It carries out the reaction tRNA(Cys) + L-cysteine + ATP = L-cysteinyl-tRNA(Cys) + AMP + diphosphate. This is Cysteine--tRNA ligase from Halorhodospira halophila (strain DSM 244 / SL1) (Ectothiorhodospira halophila (strain DSM 244 / SL1)).